Consider the following 603-residue polypeptide: Nuclear receptor subfamily 2 group C member 1 (603 aa).

Residues 1–178 are required for interaction with KAT2B; sequence MATIEEIAHQ…RLQRCIAFGM (178 aa). A DNA-binding region (nuclear receptor) is located at residues 110-185; that stretch reads FDLCVVCGDK…FGMKQDSVQC (76 aa). 2 consecutive NR C4-type zinc fingers follow at residues 113–133 and 149–168; these read CVVC…CEGC and CRGS…CQYC. 2 positions are modified to phosphoserine: Ser-197 and Ser-215. A Phosphothreonine modification is found at Thr-220. A Phosphothreonine; by MAPK1 modification is found at Thr-222. Lys-250 is covalently cross-linked (Glycyl lysine isopeptide (Lys-Gly) (interchain with G-Cter in SUMO); alternate). Lys-250 is covalently cross-linked (Glycyl lysine isopeptide (Lys-Gly) (interchain with G-Cter in SUMO2); alternate). Residues 348-590 enclose the NR LBD domain; that stretch reads GSVHLITGDS…SVIPHILKME (243 aa). Residue Ser-581 is modified to Phosphoserine; by PKC. Positions 584-603 are required for interaction with NRIP1; it reads PHILKMEPADYNSQIIGHSI. Residue Lys-588 forms a Glycyl lysine isopeptide (Lys-Gly) (interchain with G-Cter in SUMO2) linkage.

This sequence belongs to the nuclear hormone receptor family. NR2 subfamily. As to quaternary structure, homodimer. Heterodimer; binds DNA as a heterodimer with NR2C2 required for chromatin remodeling and for binding to promoter regions such as globin DR1 repeats. Interacts with ESR1; the interaction prevents homodimerization of ESR1 and suppresses its transcriptional activity and cell growth. Interacts with NRIP1 (via its LXXLL motifs); the interaction provides corepressor activity. Interacts with HDAC3 (via the DNA-binding domain). Interacts with HDAC4 (via the DNA-binding domain). Interacts with PIAS1; the interaction is required for sumoylation of NR2C1. Interacts with UBE2I; the interaction is required for sumoylation of NR2C1. Interacts with KAT2B; the interaction acts as a corepressor of gene expression. Sumoylation requires both PIAS1 and UBE2I. Sumoylation appears to dissociate NR2C1 from the PML nuclear bodies. Enhances the interaction with NRIP1 but inhibits interaction with KAT2B. In proliferating cells, stimulation by all-trans retinoic acid, activation of MAPK1-mediated phosphorylation and recruitment to PML bodies with subsequent sumoylation, suppresses OCT4 expression. Post-translationally, phosphorylated on several serine and threonine residues. Phosphorylation on Thr-220, stimulated by all-trans retinoic acid (atRA) mediates PML location and sumoylation in proliferating cells which then modulates its association with effector molecules, KAT2B and NRIP1. Phosphorylation on Ser-581 by PKC is important for protein stability and function as activator of RARB.

It is found in the nucleus. The protein resides in the PML body. Its function is as follows. Orphan nuclear receptor. Binds the IR7 element in the promoter of its own gene in an autoregulatory negative feedback mechanism. Primarily repressor of a broad range of genes. Binds to hormone response elements (HREs) consisting of two 5'-AGGTCA-3' half site direct repeat consensus sequences. Together with NR2C2, forms the core of the DRED (direct repeat erythroid-definitive) complex that represses embryonic and fetal globin transcription. Also activator of OCT4 gene expression. May be involved in stem cell proliferation and differentiation. Mediator of retinoic acid-regulated preadipocyte proliferation. The chain is Nuclear receptor subfamily 2 group C member 1 (NR2C1) from Macaca fascicularis (Crab-eating macaque).